We begin with the raw amino-acid sequence, 575 residues long: MAPPPPPTRCLPVLLLLLLVVAPLLAHGRRPFISDGGNANANANASVLRLPSAAAAAGEDMGCEMSYGFLPCTTTAWGNLFLVLAYGFLMFKSATYLSSGSEMLLQILGPGIVGGLFLPILGALPDALLILVSGLSGTKEVAQSQVLIGMGLLAGSTVMLLTLLWGSCVVVGKCDLSENSTAIDSRDTKGFSLLGSGVSTDKQTSYAARIMAISILPFIIVQIPKIFKLHSGHQITVLIGLIVAALLLLSYCLYQVFQPWIQRRRLEYTRLKHVMSGLLRHAQKHSIGRLLDDEGRPNVSVIEKLFHRIDQDNDGKLERGELQAFIVGINFEDIDWNSNLAADQVMADFDTSRNHFIEKGEFVNGMLRWLDEAKRTVTSGAYSKKFLNDFHARTRDEQTGLLDKDEEEGEADGNPTWTCIKAILLLLLGTAMAAASADPLVDAVHNFSNATHIPSFFISFIVMPLATNSSEAVSAIIFASRKKKRTLSLTFSEVYGGVTMNNTLCLAVFLALVYVRGLTWDFSSEVLIILLVCIIMGLFTSFRTDFPLWTCFVAFLLYPLSLIMVYILDYKFGWS.

The next 3 membrane-spanning stretches (helical) occupy residues 69-89, 112-132, and 146-166; these read FLPC…YGFL, IVGG…LILV, and VLIG…LLWG. An N-linked (GlcNAc...) asparagine glycan is attached at N179. The next 2 helical transmembrane spans lie at 210–230 and 237–257; these read IMAI…FKLH and VLIG…YQVF. 2 consecutive EF-hand domains span residues 297–332 and 337–372; these read PNVS…INFE and NSNL…WLDE. A glycan (N-linked (GlcNAc...) asparagine) is linked at N298. Ca(2+)-binding residues include D310, D312, D314, K316, E321, D350, S352, N354, and E361. 5 consecutive transmembrane segments (helical) span residues 417–437, 457–477, 494–514, 522–542, and 548–568; these read WTCI…AASA, FISF…SAII, VYGG…ALVY, FSSE…FTSF, and LWTC…VYIL.

This sequence belongs to the Ca(2+):cation antiporter (CaCA) (TC 2.A.19) family.

The protein resides in the cell membrane. May function as a sodium/calcium exchanger (NCX) and participate in the maintenance of calcium homeostasis. May play a role abiotic stress responses. This Oryza sativa subsp. japonica (Rice) protein is Sodium/calcium exchanger NCL2.